The following is a 273-amino-acid chain: NADPH-dependent 7-cyano-7-deazaguanine reductase (273 aa).

80-82 serves as a coordination point for substrate; the sequence is VES. 82-83 serves as a coordination point for NADPH; sequence SK. Cys180 serves as the catalytic Thioimide intermediate. Residue Asp187 is the Proton donor of the active site. 219–220 lines the substrate pocket; sequence HE. NADPH is bound at residue 248–249; that stretch reads RG.

The protein belongs to the GTP cyclohydrolase I family. QueF type 2 subfamily. In terms of assembly, homodimer.

It is found in the cytoplasm. It carries out the reaction 7-aminomethyl-7-carbaguanine + 2 NADP(+) = 7-cyano-7-deazaguanine + 2 NADPH + 3 H(+). It participates in tRNA modification; tRNA-queuosine biosynthesis. Functionally, catalyzes the NADPH-dependent reduction of 7-cyano-7-deazaguanine (preQ0) to 7-aminomethyl-7-deazaguanine (preQ1). This is NADPH-dependent 7-cyano-7-deazaguanine reductase from Bordetella bronchiseptica (strain ATCC BAA-588 / NCTC 13252 / RB50) (Alcaligenes bronchisepticus).